The sequence spans 426 residues: Tyrosine--tRNA ligase (426 aa).

Y36 contacts L-tyrosine. A 'HIGH' region motif is present at residues 41–50; sequence PTAPSLHVGH. L-tyrosine is bound by residues Y174 and Q178. Positions 234 to 238 match the 'KMSKS' region motif; sequence KLGKS. K237 provides a ligand contact to ATP. The S4 RNA-binding domain occupies 359 to 416; the sequence is DGIVDLLVASGLSPSRGAARRTIDEGGVLVNNIRIQSEEWTPRTSDFLHGRWLVLRRG.

It belongs to the class-I aminoacyl-tRNA synthetase family. TyrS type 1 subfamily. In terms of assembly, homodimer.

The protein resides in the cytoplasm. It catalyses the reaction tRNA(Tyr) + L-tyrosine + ATP = L-tyrosyl-tRNA(Tyr) + AMP + diphosphate + H(+). Its function is as follows. Catalyzes the attachment of tyrosine to tRNA(Tyr) in a two-step reaction: tyrosine is first activated by ATP to form Tyr-AMP and then transferred to the acceptor end of tRNA(Tyr). The protein is Tyrosine--tRNA ligase of Mycobacterium leprae (strain TN).